Reading from the N-terminus, the 305-residue chain is Dermonecrotic toxin LiSicTox-betaID1 (305 aa).

A signal peptide spans 1-18; that stretch reads MQLFIILCLAGSAVQLEG. Residues 19–26 constitute a propeptide that is removed on maturation; it reads TELDGVER. H38 is a catalytic residue. The Mg(2+) site is built by E58 and D60. The Nucleophile role is filled by H74. Disulfide bonds link C78-C84 and C80-C223. D118 serves as a coordination point for Mg(2+).

It belongs to the arthropod phospholipase D family. Class II subfamily. Class IIb sub-subfamily. The cofactor is Mg(2+). Expressed by the venom gland.

The protein resides in the secreted. The enzyme catalyses an N-(acyl)-sphingosylphosphocholine = an N-(acyl)-sphingosyl-1,3-cyclic phosphate + choline. It catalyses the reaction an N-(acyl)-sphingosylphosphoethanolamine = an N-(acyl)-sphingosyl-1,3-cyclic phosphate + ethanolamine. The catalysed reaction is a 1-acyl-sn-glycero-3-phosphocholine = a 1-acyl-sn-glycero-2,3-cyclic phosphate + choline. It carries out the reaction a 1-acyl-sn-glycero-3-phosphoethanolamine = a 1-acyl-sn-glycero-2,3-cyclic phosphate + ethanolamine. In terms of biological role, dermonecrotic toxins cleave the phosphodiester linkage between the phosphate and headgroup of certain phospholipids (sphingolipid and lysolipid substrates), forming an alcohol (often choline) and a cyclic phosphate. This toxin acts on sphingomyelin (SM) with low activity. It may also act on ceramide phosphoethanolamine (CPE), lysophosphatidylcholine (LPC) and lysophosphatidylethanolamine (LPE), but not on lysophosphatidylserine (LPS), and lysophosphatidylglycerol (LPG). It acts by transphosphatidylation, releasing exclusively cyclic phosphate products as second products. Has no or weak activities in inducing dermonecrosis, hemolysis, inflammatory response, platelet aggregation and increase in vessel permeability. In vivo, shows no lethality when injected at higher dose into mice. The protein is Dermonecrotic toxin LiSicTox-betaID1 of Loxosceles intermedia (Brown spider).